The sequence spans 449 residues: Telomere resolvase ResT (449 aa).

No cofactors were found to be necessary. is required as a cofactor.

It localises to the cytoplasm. The protein localises to the nucleoid. Catalyzes the conservative, sequence-specific DNA breakage and reunion reaction that generates two hairpin telomeres from a replicated telomere substrate. Breaks two phosphodiester bonds in a single DNA duplex and joins each end with the opposite DNA strand to form covalently closed hairpin telomeres. In vitro relaxed-circular, open-circular and linearized plasmids, but not supercoiled DNA, are all substrates. Cleavage is position-dependent relative to conserved sequence elements. The protein is Telomere resolvase ResT of Borreliella burgdorferi (strain ATCC 35210 / DSM 4680 / CIP 102532 / B31) (Borrelia burgdorferi).